A 298-amino-acid polypeptide reads, in one-letter code: ADP-ribosylation factor GTPase-activating protein effector protein 2 (298 aa).

S2 bears the N-acetylserine mark. The Arf-GAP domain maps to 8-130 (KKALSALLRD…KWIGDLSSIE (123 aa)). A C4-type zinc finger spans residues 23–47 (CADCKAQLHPRWASWSLGVFICIKC). The disordered stretch occupies residues 137–180 (EPVLHKPSANHSLPASNARLDQSSNSLQKTQTQPPSHLLSTSRS). Residues 145 to 171 (ANHSLPASNARLDQSSNSLQKTQTQPP) are compositionally biased toward polar residues. Phosphoserine occurs at positions 180, 183, and 207.

It is found in the cytoplasm. It localises to the golgi apparatus. GTPase-activating protein for the ADP ribosylation factor family. This Saccharomyces cerevisiae (strain ATCC 204508 / S288c) (Baker's yeast) protein is ADP-ribosylation factor GTPase-activating protein effector protein 2 (AGE2).